Reading from the N-terminus, the 78-residue chain is Sec-independent protein translocase protein TatA (78 aa).

Residues Met-1–Gly-21 traverse the membrane as a helical segment. Positions Glu-47–Ser-59 are enriched in basic and acidic residues. A disordered region spans residues Glu-47 to Ala-78. Residues Leu-60–Thr-69 are compositionally biased toward polar residues.

The protein belongs to the TatA/E family. As to quaternary structure, the Tat system comprises two distinct complexes: a TatABC complex, containing multiple copies of TatA, TatB and TatC subunits, and a separate TatA complex, containing only TatA subunits. Substrates initially bind to the TatABC complex, which probably triggers association of the separate TatA complex to form the active translocon.

It is found in the cell inner membrane. Functionally, part of the twin-arginine translocation (Tat) system that transports large folded proteins containing a characteristic twin-arginine motif in their signal peptide across membranes. TatA could form the protein-conducting channel of the Tat system. The sequence is that of Sec-independent protein translocase protein TatA from Vibrio vulnificus (strain CMCP6).